The primary structure comprises 100 residues: UPF0213 protein YhbQ (100 aa).

The 76-residue stretch at 2-77 (TPWFLYLIRT…KQLTKRQKER (76 aa)) folds into the GIY-YIG domain.

This sequence belongs to the UPF0213 family.

In Escherichia coli O157:H7, this protein is UPF0213 protein YhbQ.